The primary structure comprises 329 residues: Transmembrane protein I329L (329 aa).

A signal peptide spans 1 to 31 (MLRVFIFFVFLGSGLAGKVKSPITCKYFISK). N-linked (GlcNAc...) asparagine; by host glycans are attached at residues N32, N39, N44, N58, N76, N82, N101, N185, and N219. At 32–239 (NNTWYKYNVT…NTERYKNCYP (208 aa)) the chain is on the extracellular side. A helical transmembrane segment spans residues 240 to 260 (FVLVSIICSCISSLFLLICLL). Residues 261–329 (RTICKKYSCT…EKKVSCSRRK (69 aa)) are Cytoplasmic-facing.

It belongs to the asfivirus I329L family. In terms of processing, highly glycosylated.

The protein localises to the host endoplasmic reticulum membrane. It is found in the host Golgi apparatus membrane. Its function is as follows. Viral TLR3 homolog that probably prevents TLR3 dimerization and subsequent induction of IFN. Inhibits dsRNA-stimulated activation of NF-kB and IRF3. The sequence is that of Transmembrane protein I329L from Ornithodoros (relapsing fever ticks).